Here is a 142-residue protein sequence, read N- to C-terminus: Large ribosomal subunit protein uL11 (142 aa).

The protein belongs to the universal ribosomal protein uL11 family. Part of the ribosomal stalk of the 50S ribosomal subunit. Interacts with L10 and the large rRNA to form the base of the stalk. L10 forms an elongated spine to which L12 dimers bind in a sequential fashion forming a multimeric L10(L12)X complex. Post-translationally, one or more lysine residues are methylated.

Functionally, forms part of the ribosomal stalk which helps the ribosome interact with GTP-bound translation factors. In Parvibaculum lavamentivorans (strain DS-1 / DSM 13023 / NCIMB 13966), this protein is Large ribosomal subunit protein uL11.